The primary structure comprises 166 residues: Lipoprotein signal peptidase (166 aa).

4 helical membrane passes run 11–31 (LNLV…LYIL), 42–62 (IYIT…AFGL), 69–89 (VIYN…IFMM), and 99–119 (FFAL…VYTA). Catalysis depends on residues Asp122 and Asp140. Residues 133–153 (WFVFNVADIFITIGVFCLILV) traverse the membrane as a helical segment.

This sequence belongs to the peptidase A8 family.

It is found in the cell inner membrane. It carries out the reaction Release of signal peptides from bacterial membrane prolipoproteins. Hydrolyzes -Xaa-Yaa-Zaa-|-(S,diacylglyceryl)Cys-, in which Xaa is hydrophobic (preferably Leu), and Yaa (Ala or Ser) and Zaa (Gly or Ala) have small, neutral side chains.. Its pathway is protein modification; lipoprotein biosynthesis (signal peptide cleavage). This protein specifically catalyzes the removal of signal peptides from prolipoproteins. The polypeptide is Lipoprotein signal peptidase (Pelagibacter ubique (strain HTCC1062)).